We begin with the raw amino-acid sequence, 882 residues long: DNA mismatch repair protein MutS (882 aa).

Residue 626 to 633 participates in ATP binding; it reads GPNMAGKS.

The protein belongs to the DNA mismatch repair MutS family.

In terms of biological role, this protein is involved in the repair of mismatches in DNA. It is possible that it carries out the mismatch recognition step. This protein has a weak ATPase activity. In Anaeromyxobacter sp. (strain Fw109-5), this protein is DNA mismatch repair protein MutS.